We begin with the raw amino-acid sequence, 488 residues long: ATP synthase subunit beta (488 aa).

Residue 164–171 (GGAGVGKT) participates in ATP binding.

This sequence belongs to the ATPase alpha/beta chains family. F-type ATPases have 2 components, CF(1) - the catalytic core - and CF(0) - the membrane proton channel. CF(1) has five subunits: alpha(3), beta(3), gamma(1), delta(1), epsilon(1). CF(0) has four main subunits: a(1), b(1), b'(1) and c(9-12).

The protein resides in the cellular thylakoid membrane. The catalysed reaction is ATP + H2O + 4 H(+)(in) = ADP + phosphate + 5 H(+)(out). In terms of biological role, produces ATP from ADP in the presence of a proton gradient across the membrane. The catalytic sites are hosted primarily by the beta subunits. The chain is ATP synthase subunit beta from Prochlorococcus marinus (strain NATL2A).